A 169-amino-acid polypeptide reads, in one-letter code: Putative adenylate kinase (169 aa).

Residues G10, G12, K13, T14, and T15 each contribute to the ATP site. Positions 28-51 are NMP; sequence HLNDLVGTEGLYDGVDADRGSKIV. The interval 98–108 is LID; sequence DRGDSPEKAAE. Residue R99 coordinates ATP.

It belongs to the adenylate kinase family. AK6 subfamily. As to quaternary structure, interacts with uS11. Not a structural component of 40S pre-ribosomes, but transiently interacts with them by binding to uS11.

It catalyses the reaction AMP + ATP = 2 ADP. The enzyme catalyses ATP + H2O = ADP + phosphate + H(+). Its function is as follows. Broad-specificity nucleoside monophosphate (NMP) kinase that catalyzes the reversible transfer of the terminal phosphate group between nucleoside triphosphates and monophosphates. Also has ATPase activity. Involved in the late maturation steps of the 30S ribosomal particles, specifically 16S rRNA maturation. While NMP activity is not required for ribosome maturation, ATPase activity is. Associates transiently with small ribosomal subunit protein uS11. ATP hydrolysis breaks the interaction with uS11. May temporarily remove uS11 from the ribosome to enable a conformational change of the ribosomal RNA that is needed for the final maturation step of the small ribosomal subunit. The sequence is that of Putative adenylate kinase from Halobacterium salinarum (strain ATCC 29341 / DSM 671 / R1).